Here is a 252-residue protein sequence, read N- to C-terminus: Triosephosphate isomerase (252 aa).

10-12 (NWK) lines the substrate pocket. H96 serves as the catalytic Electrophile. E168 acts as the Proton acceptor in catalysis. Substrate-binding positions include G174, S214, and 235-236 (GG).

Belongs to the triosephosphate isomerase family. As to quaternary structure, homodimer.

The protein resides in the cytoplasm. It carries out the reaction D-glyceraldehyde 3-phosphate = dihydroxyacetone phosphate. Its pathway is carbohydrate biosynthesis; gluconeogenesis. It participates in carbohydrate degradation; glycolysis; D-glyceraldehyde 3-phosphate from glycerone phosphate: step 1/1. Functionally, seems to be capable of enhancing bacteriocin synthesis. Its function is as follows. Involved in the gluconeogenesis. Catalyzes stereospecifically the conversion of dihydroxyacetone phosphate (DHAP) to D-glyceraldehyde-3-phosphate (G3P). The polypeptide is Triosephosphate isomerase (Lactobacillus delbrueckii subsp. lactis).